The chain runs to 190 residues: Ribosome hibernation promotion factor (190 aa).

The protein belongs to the HPF/YfiA ribosome-associated protein family. Long HPF subfamily. As to quaternary structure, interacts with 100S ribosomes.

Its subcellular location is the cytoplasm. Its function is as follows. Required for dimerization of active 70S ribosomes into 100S ribosomes in stationary phase; 100S ribosomes are translationally inactive and sometimes present during exponential growth. The sequence is that of Ribosome hibernation promotion factor from Rhizobium meliloti (strain 1021) (Ensifer meliloti).